The chain runs to 402 residues: Ketol-acid reductoisomerase, mitochondrial (402 aa).

A mitochondrion-targeting transit peptide spans 1 to 26; it reads MAARNCTKALRPLARQLATPAVQRRT. Residues 63-252 form the KARI N-terminal Rossmann domain; the sequence is KEEVHERADW…AVGSGYLYET (190 aa). NADP(+)-binding positions include 90–99, 114–119, and 152–156; these read GYGSQGHGQG, RKNGKS, and SDAAQ. Histidine 177 is an active-site residue. A KARI C-terminal knotted domain is found at 253–400; the sequence is TFEKEVYSDL…KAVRSLRPEN (148 aa). Positions 261, 265, 297, and 301 each coordinate Mg(2+). Serine 323 lines the substrate pocket.

The protein belongs to the ketol-acid reductoisomerase family. Mg(2+) serves as cofactor.

The protein localises to the mitochondrion. The enzyme catalyses (2R)-2,3-dihydroxy-3-methylbutanoate + NADP(+) = (2S)-2-acetolactate + NADPH + H(+). It carries out the reaction (2R,3R)-2,3-dihydroxy-3-methylpentanoate + NADP(+) = (S)-2-ethyl-2-hydroxy-3-oxobutanoate + NADPH + H(+). Its pathway is amino-acid biosynthesis; L-isoleucine biosynthesis; L-isoleucine from 2-oxobutanoate: step 2/4. The protein operates within amino-acid biosynthesis; L-valine biosynthesis; L-valine from pyruvate: step 2/4. The sequence is that of Ketol-acid reductoisomerase, mitochondrial (ilv-2) from Neurospora crassa (strain ATCC 24698 / 74-OR23-1A / CBS 708.71 / DSM 1257 / FGSC 987).